The following is a 273-amino-acid chain: MKSFITSWADEVDADYVDGLPPSNEYIKGDYKYVTEYKFNDDGKKVKVVRTFKIEKQIVPKAVARRRNWVKFGDSRSDKPGPNSQTTMASEEILMQFIGSKEFDQTHETQLDPGKNIAKCRICNGEHWSVNCPYKGTSMDSKTMMETKANAAAAAAISDPSKTGKYVPPFMKDGGGISGSKNWGRGRDRDDSSAVRISNLSESMTETDLEELVKKIGPHTKMYLAREKNSGLCKGFAYVHFKFRQDAAAAIEVLNGHGYDHLILCVEWSKPQP.

The region spanning 193–271 is the RRM domain; the sequence is SAVRISNLSE…LILCVEWSKP (79 aa).

This sequence belongs to the eIF-3 subunit G family. Component of the eukaryotic translation initiation factor 3 (eIF-3) complex. The eIF-3 complex interacts with pix.

The protein resides in the cytoplasm. Its function is as follows. RNA-binding component of the eukaryotic translation initiation factor 3 (eIF-3) complex, which is involved in protein synthesis of a specialized repertoire of mRNAs and, together with other initiation factors, stimulates binding of mRNA and methionyl-tRNAi to the 40S ribosome. The eIF-3 complex specifically targets and initiates translation of a subset of mRNAs involved in cell proliferation. This subunit can bind 18S rRNA. The chain is Eukaryotic translation initiation factor 3 subunit G-2 from Drosophila simulans (Fruit fly).